A 106-amino-acid polypeptide reads, in one-letter code: Programmed cell death activator egl-1 (106 aa).

The BH3-like stretch occupies residues 73 to 81 (LAAMCDDFD).

As to quaternary structure, interacts with ced-9; the interaction results in ced-4 release from the ced-4/ced-9 complex. Interaction with ced-9 may enhance interaction of ced-9 with drp-1, but not with ced-4. A ced-9/egl-1 complex may recruit drp-1 to the mitochondrial surface.

The protein localises to the synapse. Its function is as follows. Plays a major role in programmed cell death (PCD or apoptosis) by negatively regulating ced-9. Binds to and directly inhibits the activity of ced-9, releasing the cell death activator ced-4 from a ced-9/ced-4 containing protein complex and allowing ced-4 to activate the cell-killing caspase ced-3. Required to activate programmed cell death in the sister cells of the serotonergic neurosecretory motor (NSM) neurons during embryogenesis. Required to activate programmed cell death in the sister cells of the M4 motor neuron and I1 pharyngeal neuron during embryogenesis. During larval development, required for the elimination of transient presynaptic components upstream of ced-9, ced-4 and ced-3 apoptotic pathway. Together with ain-1, a component of the miRNA-induced-silencing complex (miRISC), and probably upstream of ced-3 and ced-4, regulates temporal cell fate patterning during larval development. Has been shown in two studies to be dispensable in mitochondrial dynamics and morphology during early embryonic development. However, one study shows that during larval development, egl-1 is involved in modulating mitochondrial dynamics, perhaps acting by stabilizing the interaction between ced-9 and drp-1 in order to promote mitochondrial fission. Involved in inducing mitochondrial fragmentation during apoptosis, probably acting via ced-9 and dynamin-related protein drp-1. The sequence is that of Programmed cell death activator egl-1 from Caenorhabditis elegans.